The following is a 141-amino-acid chain: HTH-type transcriptional repressor NsrR (141 aa).

One can recognise an HTH rrf2-type domain in the interval 2-129; sequence QLTSFTDYGL…DNYTLADMVQ (128 aa). Positions 28-51 form a DNA-binding region, H-T-H motif; the sequence is ISQVTEVYGVSRNHMVKIINQLSR. [2Fe-2S] cluster contacts are provided by C91, C96, and C102.

It depends on [2Fe-2S] cluster as a cofactor.

Nitric oxide-sensitive repressor of genes involved in protecting the cell against nitrosative stress. May require iron for activity. This Yersinia enterocolitica serotype O:8 / biotype 1B (strain NCTC 13174 / 8081) protein is HTH-type transcriptional repressor NsrR.